The chain runs to 788 residues: Integrin beta-6 (788 aa).

The N-terminal stretch at 1-21 (MGIELLCLFFLCLGRNDHVQG) is a signal peptide. The 50-residue stretch at 22–71 (GCAVGGAETCEDCLLIGPQCAWCSQENFTHLSGVGERCDTPANLLAKGCQ) folds into the PSI domain. The Extracellular portion of the chain corresponds to 22-709 (GCAVGGAETC…KDCPKPPNIP (688 aa)). Cystine bridges form between C23/C41, C31/C454, C34/C59, C44/C70, C197/C204, C252/C293, C394/C406, C426/C452, C456/C476, C467/C479, C481/C490, C492/C519, C502/C517, C511/C522, C524/C537, C539/C560, C544/C558, C552/C563, and C565/C574. N-linked (GlcNAc...) asparagine glycosylation is found at N48 and N97. A VWFA domain is found at 131 to 371 (YPVDLYYLMD…QLIISAYEEL (241 aa)). Mg(2+) contacts are provided by D140, S142, and S144. Ca(2+) is bound by residues S144, D147, D148, and E179. Residues N235, D237, P239, and E240 each contribute to the Ca(2+) site. Position 240 (E240) interacts with Mg(2+). N260 carries N-linked (GlcNAc...) asparagine glycosylation. 2 residues coordinate Ca(2+): D271 and K355. N-linked (GlcNAc...) asparagine glycosylation is present at N387. N-linked (GlcNAc...) asparagine glycosylation occurs at N418. I-EGF domains follow at residues 456–491 (CQKEVEVNSSKCNNGNGSFQCGVCACHPGHMGHHCE), 492–538 (CGED…PYCQ), 539–575 (CDNFSCVRHKGLLCGDNGDCDCGECVCRSGWTGEYCN), and 576–615 (CTTSTDPCVSEDGILCSGRGDCVCGKCICTNPGASGPTCE). N-linked (GlcNAc...) asparagine glycans are attached at residues N463 and N471. N-linked (GlcNAc...) asparagine glycosylation occurs at N541. N575 is a glycosylation site (N-linked (GlcNAc...) asparagine). 9 disulfides stabilise this stretch: C576–C599, C583–C597, C591–C602, C604–C614, C617–C620, C624–C670, C630–C649, C633–C645, and C678–C702. Residues 710-730 (MIMLGVSLAILLIGVVLLCIW) traverse the membrane as a helical segment. The tract at residues 731–758 (KLLVSFHDRKEVAKFEAERSKAKWQTGT) is interaction with HAX1. Topologically, residues 731-788 (KLLVSFHDRKEVAKFEAERSKAKWQTGTNPLYRGSTSTFKNVTYKHKEKQKVDLSTDG) are cytoplasmic.

Belongs to the integrin beta chain family. As to quaternary structure, heterodimer of an alpha and a beta subunit. Interacts with FLNB. Interacts with HAX1. ITGAV:ITGB6 interacts with FBN1. ITGAV:ITGB6 interacts with TGFB1.

It localises to the cell membrane. The protein localises to the cell junction. It is found in the focal adhesion. Integrin alpha-V:beta-6 (ITGAV:ITGB6) is a receptor for fibronectin and cytotactin. It recognizes the sequence R-G-D in its ligands. ITGAV:ITGB6 acts as a receptor for fibrillin-1 (FBN1) and mediates R-G-D-dependent cell adhesion to FBN1. Integrin alpha-V:beta-6 (ITGAV:ITGB6) mediates R-G-D-dependent release of transforming growth factor beta-1 (TGF-beta-1) from regulatory Latency-associated peptide (LAP), thereby playing a key role in TGF-beta-1 activation. The polypeptide is Integrin beta-6 (ITGB6) (Bos taurus (Bovine)).